Consider the following 378-residue polypeptide: Queuine tRNA-ribosyltransferase (378 aa).

Residue aspartate 91 is the Proton acceptor of the active site. Substrate is bound by residues 91–95, aspartate 145, glutamine 197, and glycine 224; that span reads DSGGF. The active-site Nucleophile is the aspartate 274. An RNA binding; important for wobble base 34 recognition region spans residues 279–283; that stretch reads TRLAR. Zn(2+)-binding residues include cysteine 312, cysteine 314, cysteine 317, and histidine 343.

This sequence belongs to the queuine tRNA-ribosyltransferase family. Homodimer. Within each dimer, one monomer is responsible for RNA recognition and catalysis, while the other monomer binds to the replacement base PreQ1. Requires Zn(2+) as cofactor.

The catalysed reaction is 7-aminomethyl-7-carbaguanine + guanosine(34) in tRNA = 7-aminomethyl-7-carbaguanosine(34) in tRNA + guanine. The protein operates within tRNA modification; tRNA-queuosine biosynthesis. Its function is as follows. Catalyzes the base-exchange of a guanine (G) residue with the queuine precursor 7-aminomethyl-7-deazaguanine (PreQ1) at position 34 (anticodon wobble position) in tRNAs with GU(N) anticodons (tRNA-Asp, -Asn, -His and -Tyr). Catalysis occurs through a double-displacement mechanism. The nucleophile active site attacks the C1' of nucleotide 34 to detach the guanine base from the RNA, forming a covalent enzyme-RNA intermediate. The proton acceptor active site deprotonates the incoming PreQ1, allowing a nucleophilic attack on the C1' of the ribose to form the product. After dissociation, two additional enzymatic reactions on the tRNA convert PreQ1 to queuine (Q), resulting in the hypermodified nucleoside queuosine (7-(((4,5-cis-dihydroxy-2-cyclopenten-1-yl)amino)methyl)-7-deazaguanosine). This chain is Queuine tRNA-ribosyltransferase, found in Methylacidiphilum infernorum (isolate V4) (Methylokorus infernorum (strain V4)).